A 338-amino-acid polypeptide reads, in one-letter code: Glycerol-3-phosphate dehydrogenase [NAD(P)+] (338 aa).

Ser13, Trp14, and Lys108 together coordinate NADPH. Residues Lys108, Gly139, and Ser141 each contribute to the sn-glycerol 3-phosphate site. Residue Ala143 participates in NADPH binding. Positions 194, 247, 257, 258, and 259 each coordinate sn-glycerol 3-phosphate. Lys194 (proton acceptor) is an active-site residue. Arg258 serves as a coordination point for NADPH. The NADPH site is built by Val282 and Glu284.

The protein belongs to the NAD-dependent glycerol-3-phosphate dehydrogenase family.

It is found in the cytoplasm. The catalysed reaction is sn-glycerol 3-phosphate + NAD(+) = dihydroxyacetone phosphate + NADH + H(+). The enzyme catalyses sn-glycerol 3-phosphate + NADP(+) = dihydroxyacetone phosphate + NADPH + H(+). The protein operates within membrane lipid metabolism; glycerophospholipid metabolism. Functionally, catalyzes the reduction of the glycolytic intermediate dihydroxyacetone phosphate (DHAP) to sn-glycerol 3-phosphate (G3P), the key precursor for phospholipid synthesis. This is Glycerol-3-phosphate dehydrogenase [NAD(P)+] from Listeria innocua serovar 6a (strain ATCC BAA-680 / CLIP 11262).